Here is an 858-residue protein sequence, read N- to C-terminus: ATP-dependent DNA helicase Q-like SIM (858 aa).

A UBA domain is found at 2 to 44 (DLSSDQLVMKIVEMGFEKLDALEAVKAVGGKSCDDAVEYILKG). The Helicase ATP-binding domain occupies 177–353 (LSTWVAHKDC…LESLHLSKET (177 aa)). 190–197 (AATGSGKS) is an ATP binding site. The DEAH box motif lies at 288-291 (DEAH). Positions 402–450 (LAVISRESEEQTDFGSHDSENIHETDYDEDEEDQENSLAKKNSSNGKEL) are disordered. Residues 416-426 (GSHDSENIHET) are compositionally biased toward basic and acidic residues. The span at 427–436 (DYDEDEEDQE) shows a compositional bias: acidic residues. Residues 437 to 448 (NSLAKKNSSNGK) are compositionally biased toward polar residues. The region spanning 491–627 (EKQKDLEGLT…QTEQAYKMLS (137 aa)) is the Helicase C-terminal domain. The tract at residues 822–858 (RQRLERRERKPRRERKPRKKRTRGRSSTKLHPWRSKE) is disordered. Positions 830 to 858 (RKPRRERKPRKKRTRGRSSTKLHPWRSKE) are enriched in basic residues.

It belongs to the helicase family. RecQ subfamily. Requires Mg(2+) as cofactor. It depends on Mn(2+) as a cofactor. In terms of tissue distribution, mostly expressed in roots and seedlings, and, to a lower extent, in leaves, shoots, shoot apical mersitem, inflorescences, flowers, siliques and seeds.

It is found in the nucleus. It catalyses the reaction Couples ATP hydrolysis with the unwinding of duplex DNA by translocating in the 3'-5' direction.. The catalysed reaction is ATP + H2O = ADP + phosphate + H(+). Plant specific, probable 3'-5' DNA helicase that may play a role in the repair of DNA. This chain is ATP-dependent DNA helicase Q-like SIM (RECQSIM), found in Arabidopsis thaliana (Mouse-ear cress).